The sequence spans 397 residues: Acetate kinase (397 aa).

N8 is a binding site for Mg(2+). ATP is bound at residue K15. R89 contacts substrate. The Proton donor/acceptor role is filled by D146. ATP contacts are provided by residues 206 to 210 (HLGNG), 281 to 283 (DLR), and 329 to 333 (GVGEN). E382 serves as a coordination point for Mg(2+).

This sequence belongs to the acetokinase family. Homodimer. Mg(2+) serves as cofactor. It depends on Mn(2+) as a cofactor.

The protein localises to the cytoplasm. It carries out the reaction acetate + ATP = acetyl phosphate + ADP. It participates in metabolic intermediate biosynthesis; acetyl-CoA biosynthesis; acetyl-CoA from acetate: step 1/2. Catalyzes the formation of acetyl phosphate from acetate and ATP. Can also catalyze the reverse reaction. The protein is Acetate kinase of Bacillus cereus (strain ATCC 14579 / DSM 31 / CCUG 7414 / JCM 2152 / NBRC 15305 / NCIMB 9373 / NCTC 2599 / NRRL B-3711).